Reading from the N-terminus, the 157-residue chain is Nicotinate dehydrogenase small FeS subunit (157 aa).

The region spanning 4-80 (ITINLNLNGE…ESTIITLEGV (77 aa)) is the 2Fe-2S ferredoxin-type domain. 8 residues coordinate [2Fe-2S] cluster: cysteine 42, cysteine 47, cysteine 50, cysteine 62, cysteine 101, cysteine 104, cysteine 136, and cysteine 138.

As to quaternary structure, heterooctamer of NDHM, NDHL, NDHS and NDHF. Dimer of heterotetramers. The cofactor is [2Fe-2S] cluster.

The enzyme catalyses nicotinate + NADP(+) + H2O = 6-hydroxynicotinate + NADPH + H(+). The protein operates within cofactor degradation; nicotinate degradation; 6-hydroxynicotinate from nicotinate: step 1/1. Its activity is regulated as follows. Reversibly inactivated by selenide and sulfide. Not inhibited by cyanide. Catalyzes the hydroxylation of nicotinate to 6-hydroxynicotinate. Also active against 2-pyrazinecarboxylic acid, but inactive against other nicotinate analogs. The polypeptide is Nicotinate dehydrogenase small FeS subunit (ndhS) (Eubacterium barkeri (Clostridium barkeri)).